Reading from the N-terminus, the 247-residue chain is UPF0246 protein LAF_1150 (247 aa).

This sequence belongs to the UPF0246 family.

This chain is UPF0246 protein LAF_1150, found in Limosilactobacillus fermentum (strain NBRC 3956 / LMG 18251) (Lactobacillus fermentum).